The following is a 496-amino-acid chain: Cytochrome P450 71D180 (496 aa).

Residues 1-21 form a helical; Signal-anchor for type II membrane protein membrane-spanning segment; sequence MDISISWVVIIVFVLSYLILM. C435 contributes to the heme binding site. Residues 471 to 496 are disordered; that stretch reads MSETPGLSGPRKNPLIMIPTIHNPTS.

The protein belongs to the cytochrome P450 family. Heme is required as a cofactor. In terms of tissue distribution, mostly expressed in flowers and stems, and, to a lower extent, in leaves.

It localises to the membrane. It catalyses the reaction gamma-terpinene + 2 reduced [NADPH--hemoprotein reductase] + 2 O2 = carvacrol + 2 oxidized [NADPH--hemoprotein reductase] + 3 H2O + 2 H(+). The enzyme catalyses (4S)-limonene + reduced [NADPH--hemoprotein reductase] + O2 = (1S,5R)-carveol + oxidized [NADPH--hemoprotein reductase] + H2O + H(+). It carries out the reaction (4R)-limonene + reduced [NADPH--hemoprotein reductase] + O2 = (1R,5S)-carveol + oxidized [NADPH--hemoprotein reductase] + H2O + H(+). It participates in secondary metabolite biosynthesis; terpenoid biosynthesis. In terms of biological role, involved in the biosynthesis of phenolic monoterpenes natural products thymol and carvacrol which have a broad range of biological activities acting as antimicrobial compounds, insecticides, antioxidants and pharmaceutical agents. Catalyzes the C2-hydroxylation of gamma-terpinene to produce carvacrol. Also mediates the C6-hydroxylation of (4S)-limonene and (4R)-limonene to form carveol. This chain is Cytochrome P450 71D180, found in Origanum vulgare (Wild marjoram).